A 325-amino-acid polypeptide reads, in one-letter code: D-xylose 1-dehydrogenase (NADP(+)) 2 (325 aa).

The signal sequence occupies residues 1–22; sequence MMFGILGTAGIGVKSVIPAVQA.

Belongs to the Gfo/Idh/MocA family. In terms of assembly, homotetramer.

It is found in the secreted. It carries out the reaction D-xylose + NADP(+) = D-xylono-1,5-lactone + NADPH + H(+). In terms of biological role, NADP-dependent D-xylose dehydrogenase involved in the degradation of D-xylose, a major component of hemicelluloses such as xylan. Even if it shows D-xylose dehydrogenase activity, it is not essential for D-xylose degradation. This Haloferax volcanii (strain ATCC 29605 / DSM 3757 / JCM 8879 / NBRC 14742 / NCIMB 2012 / VKM B-1768 / DS2) (Halobacterium volcanii) protein is D-xylose 1-dehydrogenase (NADP(+)) 2.